The primary structure comprises 163 residues: Olfactory marker protein (163 aa).

Ala-2 bears the N-acetylalanine mark.

It belongs to the olfactory marker protein family. Interacts with BEX1 and BEX2. As to expression, uniquely associated with mature olfactory receptor neurons.

The protein localises to the cytoplasm. Functionally, may act as a modulator of the olfactory signal-transduction cascade. The protein is Olfactory marker protein (Omp) of Rattus norvegicus (Rat).